The primary structure comprises 585 residues: MASVVVKTIWQSKEIHEAGDPPAGVESRAQLVPEAPGGVTSPAKGITKKKKAVSFHGVEPRMSHEPMHWCLNLKRSSACTNVSLLNLAAVEPDSSGTDSTTEDSGPLALPGPPASPTTPWAPEDPDITELLSGVNSGLVRAKDSITSLKEKTTRVNQHVQTLQSECSVLSENLERRRQEAEELEGYCSQLKGPRPDVLTQENCRKVTRSVEDAEIKTNVLKQNSALLEEKLRYLQQQLQDETPRRQEAELQELEQKLEAGLSRHGLSPATPIQGCSGPPGSPEEPPRQRGLSSSGWGMAVRTGEGPSLSEQELQKVSTGLEELRREVSSLAARWHQEEGAVQEALRLLGGLGGRLDGFLGQWERAQREQAQSARGLQELRGRADELCTMVERSAVSVASLRSELEALGPVKPILEELGRQLQNSRRGADHVLNLDRSAQGPCARCASQGQQLSTESLQQLLERALTPLVDEVKQKGLAPACPSCQRLHKKILELERQALAKHVRAEALSSTLRLAQDEAVRAKNLLLTDKMKPEEKVATLDYMHLKMCSLHDQLSHLPLEGSTGAMGGGSNGGAPPKRGSPGSEQ.

A compositionally biased stretch (low complexity) spans Glu91–Ala108. Positions Glu91–Pro125 are disordered. A Phosphoserine modification is found at Ser224. Disordered regions lie at residues His264–Glu312 and Leu559–Gln585. Position 281 is a phosphoserine; by TSSK1 and TSSK2 (Ser281). A Phosphoserine modification is found at Ser309.

Post-translationally, phosphorylated on serine residue(s) by STK22A/TSSK1 and STK22B/TSSK2. As to expression, testis specific.

The protein localises to the cytoplasm. Its subcellular location is the cytoskeleton. It localises to the microtubule organizing center. It is found in the centrosome. The protein resides in the centriole. The protein localises to the cytoplasmic vesicle. Its subcellular location is the secretory vesicle. It localises to the acrosome. Its function is as follows. May play a role in testicular physiology, most probably in the process of spermatogenesis or spermatid development. The polypeptide is Testis-specific serine kinase substrate (Tsks) (Mus musculus (Mouse)).